Consider the following 303-residue polypeptide: Aspartate carbamoyltransferase catalytic subunit (303 aa).

2 residues coordinate carbamoyl phosphate: Arg-51 and Thr-52. An L-aspartate-binding site is contributed by Lys-80. Arg-101, His-129, and Gln-132 together coordinate carbamoyl phosphate. 2 residues coordinate L-aspartate: Arg-162 and Arg-221. Leu-260 and Pro-261 together coordinate carbamoyl phosphate.

It belongs to the aspartate/ornithine carbamoyltransferase superfamily. ATCase family. As to quaternary structure, heterooligomer of catalytic and regulatory chains.

The catalysed reaction is carbamoyl phosphate + L-aspartate = N-carbamoyl-L-aspartate + phosphate + H(+). It functions in the pathway pyrimidine metabolism; UMP biosynthesis via de novo pathway; (S)-dihydroorotate from bicarbonate: step 2/3. Its function is as follows. Catalyzes the condensation of carbamoyl phosphate and aspartate to form carbamoyl aspartate and inorganic phosphate, the committed step in the de novo pyrimidine nucleotide biosynthesis pathway. This is Aspartate carbamoyltransferase catalytic subunit from Saccharolobus solfataricus (strain ATCC 35092 / DSM 1617 / JCM 11322 / P2) (Sulfolobus solfataricus).